We begin with the raw amino-acid sequence, 61 residues long: MARYRHSRSRSRXRYRRRRRRRSRYRSRRRRYRGSRRSRSRRRGRRRGYSRRRYSRRRRRY.

Residues 1–61 (MARYRHSRSR…RRYSRRRRRY (61 aa)) form a disordered region.

Belongs to the protamine P1 family. In terms of tissue distribution, testis.

It is found in the nucleus. It localises to the chromosome. Functionally, protamines substitute for histones in the chromatin of sperm during the haploid phase of spermatogenesis. They compact sperm DNA into a highly condensed, stable and inactive complex. This is Sperm protamine P1 (PRM1) from Potorous longipes (Long-footed potoroo).